A 438-amino-acid chain; its full sequence is MSLMSSSMVLCHCLSFSSQNPDPESSSSSLLRYKPCDSISLWGKRRKKLWRFVPSAEKNNSHTGNNNKRRRSWWQRFFFDDDGNWLGLRDDDIVDETTELAKDDEMSDEEKFETWKRRAEAIVELREGQEEIGDSGVVADVTKKWEDWIVDSDDSFVESWTRDSAGSDDNLELDELTIPDGGLVKMVRDMVLGAEEEDILYEDRIFRYASSKSAKFLAVLILIPWALDFLAHDYLLMPFLDRYVKTVPLAAQTLDVRRNQKLEMVKELNREKARYRLEVEIGKSPPLSDDDLWWEMRGKALELRDEWRLENRKAFANIWSDMVFGISLFVLLYANQGRVALLKFTGYKIINNISDTGKAFLIILITDIFLGYHSESGWETLLEIIMEHYGLEVEQSTITIFICLVPVIMDACVKLWLFKFLPRLSPRVSNIFQEMKRH.

Residues 1-54 (MSLMSSSMVLCHCLSFSSQNPDPESSSSSLLRYKPCDSISLWGKRRKKLWRFVP) constitute a chloroplast transit peptide. Helical transmembrane passes span 216-236 (FLAV…DYLL), 314-334 (AFAN…LLYA), 359-379 (AFLI…SGWE), and 398-418 (ITIF…LWLF).

It belongs to the CemA family.

The protein resides in the plastid. It is found in the chloroplast envelope. It localises to the chloroplast membrane. It carries out the reaction K(+)(in) + H(+)(out) = K(+)(out) + H(+)(in). The enzyme catalyses Ca(2+)(in) + H(+)(out) = Ca(2+)(out) + H(+)(in). Its function is as follows. Promotes K(+)/H(+) antiport activity supporting K(+) efflux to control H(+) homeostasis in chloroplasts. Also able to ensure Ca(2+)/H(+) antiport activity in vitro. Essential for chloroplast pH regulation and optimization of non-photochemical quenching (NPQ), a regulatory mechanism that dissipates excess light energy; acts downstream of PSBS but independently from PGR5 and FLAP1. This is Protein DAY-LENGTH-DEPENDENT DELAYED-GREENING 1, chloroplastic from Arabidopsis thaliana (Mouse-ear cress).